The primary structure comprises 259 residues: Deoxyribose-phosphate aldolase (259 aa).

The active-site Proton donor/acceptor is aspartate 102. The active-site Schiff-base intermediate with acetaldehyde is lysine 167. Lysine 201 acts as the Proton donor/acceptor in catalysis.

The protein belongs to the DeoC/FbaB aldolase family. DeoC type 2 subfamily.

It is found in the cytoplasm. The enzyme catalyses 2-deoxy-D-ribose 5-phosphate = D-glyceraldehyde 3-phosphate + acetaldehyde. Its pathway is carbohydrate degradation; 2-deoxy-D-ribose 1-phosphate degradation; D-glyceraldehyde 3-phosphate and acetaldehyde from 2-deoxy-alpha-D-ribose 1-phosphate: step 2/2. In terms of biological role, catalyzes a reversible aldol reaction between acetaldehyde and D-glyceraldehyde 3-phosphate to generate 2-deoxy-D-ribose 5-phosphate. The polypeptide is Deoxyribose-phosphate aldolase (Proteus mirabilis (strain HI4320)).